The sequence spans 317 residues: Acetyl-coenzyme A carboxylase carboxyl transferase subunit alpha (317 aa).

Residues 40 to 293 form the CoA carboxyltransferase C-terminal domain; that stretch reads LEVRVREAIL…GDVIANALAE (254 aa).

It belongs to the AccA family. In terms of assembly, acetyl-CoA carboxylase is a heterohexamer composed of biotin carboxyl carrier protein (AccB), biotin carboxylase (AccC) and two subunits each of ACCase subunit alpha (AccA) and ACCase subunit beta (AccD).

Its subcellular location is the cytoplasm. The catalysed reaction is N(6)-carboxybiotinyl-L-lysyl-[protein] + acetyl-CoA = N(6)-biotinyl-L-lysyl-[protein] + malonyl-CoA. Its pathway is lipid metabolism; malonyl-CoA biosynthesis; malonyl-CoA from acetyl-CoA: step 1/1. Functionally, component of the acetyl coenzyme A carboxylase (ACC) complex. First, biotin carboxylase catalyzes the carboxylation of biotin on its carrier protein (BCCP) and then the CO(2) group is transferred by the carboxyltransferase to acetyl-CoA to form malonyl-CoA. The sequence is that of Acetyl-coenzyme A carboxylase carboxyl transferase subunit alpha from Rhizobium etli (strain CIAT 652).